We begin with the raw amino-acid sequence, 667 residues long: MTIIDASERIAQLRQEIERHNYLYFNEAKPELSDYEFDKLLEELMALEREFPDLLTPDSPSQRVGGTITKEFPVVTHREPMLSLANTYSAGEVAEFYNRVAKLLAAENVHKQEMVAELKFDGVAISLLYRDGVLVRGATRGDGVQGDDITPNIRTIASIPLRLHQPLAGEVEVRGEIFMRKEDFEQLNDNRPEEERFANPRNATAGTLKLQDSAEVARRRMNFVAYYLKGLKDETLDHVSRLHKLEALGFTTGGHYRRCKTIEEINTFINEWEEKRWKLPYETDGVVLKLNNVQLWEQLGATAKSPRWAIAYKYPAQQARTQLCNVVFQVGRIGTITPVAELTPVLLAGSTVSRSTLHNFDEIERLSVMILDYVMIEKSGEVIPKVVRTLPDERPADAHAIAIPTHCPECDTPLIKPENEVSWYCPNEEHCPAQIRGRLLHFASRNAMDIKGLGDALVEQLVAWGLVHDVGDLYLLQEPQLERMERMGKKSAQNLIRALDESRTRSYDRLLYALGIRHVGRATARELAHAFPTLDALMQANEERLAEVPDIGTTVAQSIVDFFAKPSSRQLVDKLREARLQLAASASKIEQVNRNFEGMSLLFTGTLERYTRQQAAELVVERGGRVVESISKKTSLLVAGRDGGSKLDKAHKLGVRVISEDEFMGMM.

NAD(+)-binding positions include 34–38 (DYEFD), 83–84 (SL), and glutamate 117. The N6-AMP-lysine intermediate role is filled by lysine 119. NAD(+)-binding residues include arginine 140, glutamate 176, lysine 289, and lysine 313. Residues cysteine 407, cysteine 410, cysteine 425, and cysteine 431 each contribute to the Zn(2+) site. The BRCT domain maps to 591-667 (QVNRNFEGMS…ISEDEFMGMM (77 aa)).

The protein belongs to the NAD-dependent DNA ligase family. LigA subfamily. It depends on Mg(2+) as a cofactor. Mn(2+) is required as a cofactor.

It carries out the reaction NAD(+) + (deoxyribonucleotide)n-3'-hydroxyl + 5'-phospho-(deoxyribonucleotide)m = (deoxyribonucleotide)n+m + AMP + beta-nicotinamide D-nucleotide.. Functionally, DNA ligase that catalyzes the formation of phosphodiester linkages between 5'-phosphoryl and 3'-hydroxyl groups in double-stranded DNA using NAD as a coenzyme and as the energy source for the reaction. It is essential for DNA replication and repair of damaged DNA. This is DNA ligase from Chlorobium chlorochromatii (strain CaD3).